The primary structure comprises 252 residues: Probable transcriptional regulatory protein TW504 (252 aa).

The protein belongs to the TACO1 family.

It localises to the cytoplasm. This is Probable transcriptional regulatory protein TW504 from Tropheryma whipplei (strain TW08/27) (Whipple's bacillus).